A 380-amino-acid polypeptide reads, in one-letter code: Ubiquitin-like protein 7 (380 aa).

The 81-residue stretch at 18–98 (APKSILQLPE…VLRKSWPEPD (81 aa)) folds into the Ubiquitin-like domain. Residues 200 to 313 (TPMPGADSSS…SSGVQSGTPI (114 aa)) are disordered. Residues 206–221 (DSSSRSMPSSSYRDMP) are compositionally biased toward low complexity. Residue serine 230 is modified to Phosphoserine. 2 stretches are compositionally biased toward low complexity: residues 239 to 253 (STRS…SSRP) and 270 to 293 (SELA…TPGT). The span at 294–313 (QGHSSGTSPMSSGVQSGTPI) shows a compositional bias: polar residues. One can recognise a UBA domain in the interval 333–377 (SLQIQWQPQLQQLRDMGIQDDELSLRALQATGGDIQAALELIFAG).

Binds ubiquitin. Interacts with MAVS; this interaction enhances TRIM21-dependent 'Lys-27'-linked polyubiquitination of MAVS. Deubiquitinated by OTUD4 which stabilizes UBL7 expression.

Its function is as follows. Interferon-stimulated protein that positively regulates RNA virus-triggered innate immune signaling. Mechanistically, promotes 'Lys-27'-linked polyubiquitination of MAVS through TRIM21 leading to enhanced the IFN signaling pathway. This Mus musculus (Mouse) protein is Ubiquitin-like protein 7 (Ubl7).